Here is a 310-residue protein sequence, read N- to C-terminus: Homeobox protein dsc-1 (310 aa).

The segment at residues 180 to 239 (RRRFRTNFTELQSTFLEDSFKESHYPDHKAKKYMADFLKIPEDRITVWFQNRRAKWRRKE) is a DNA-binding region (homeobox). The segment at 262-310 (CFSAQHPDDGPNAKHPNSFGIPNQPMSLDQFPMNTEQDFPEFPSLQEHQ) is disordered. Residues 281–298 (GIPNQPMSLDQFPMNTEQ) show a composition bias toward polar residues.

As to expression, expressed in the bilateral sensory neurons AWA, AWB, AWC, ASE, FLP and PVD. Also expressed in the enteric intestinal and anal depressor muscles.

Its subcellular location is the nucleus. It is found in the cell projection. The protein resides in the axon. The protein localises to the cytoplasm. Its function is as follows. Transcriptional regulator which plays a role in the expulsion step of defecation by controlling enteric muscle-specific expression of exp-1 which is required for enteric muscle contraction. Not required for exp-1 expression in the PDA neuron. Also involved in controlling the length of the defecation cycle. The chain is Homeobox protein dsc-1 from Caenorhabditis elegans.